A 215-amino-acid polypeptide reads, in one-letter code: LysM and putative peptidoglycan-binding domain-containing protein 2 (215 aa).

The interval 1-40 (MADSSPAPSLRAGGPREPRPSAPSPPPPHSRLGSEAEEAE) is disordered. N-acetylalanine is present on alanine 2. Serine 5, serine 24, serine 34, and serine 58 each carry phosphoserine. A compositionally biased stretch (pro residues) spans 20-29 (PSAPSPPPPH). In terms of domain architecture, LysM spans 72–116 (VEHRVRAGDTLQGIALKYGVSMEQIKRANKLFTNDCIFLKKTLNI). Positions 194 to 215 (AKKLKGESRDEEGLYTASLYHS) are disordered.

The protein is LysM and putative peptidoglycan-binding domain-containing protein 2 (LYSMD2) of Bos taurus (Bovine).